We begin with the raw amino-acid sequence, 331 residues long: Olfactory receptor 6S1 (331 aa).

The Extracellular segment spans residues Met1–Leu29. Asn6 carries N-linked (GlcNAc...) asparagine glycosylation. Residues Phe30–Val50 form a helical membrane-spanning segment. Residues Val51–Thr59 are Cytoplasmic-facing. A helical membrane pass occupies residues Pro60–Ile80. Residues Pro81–Cys99 are Extracellular-facing. Cys99 and Cys182 are joined by a disulfide. A helical membrane pass occupies residues Ile100–Met120. Residues Ser121–Ala147 lie on the Cytoplasmic side of the membrane. Residues Leu148–Leu168 form a helical membrane-spanning segment. At Pro169–Ser207 the chain is on the extracellular side. Residues Leu208–Val228 traverse the membrane as a helical segment. Residues Leu229 to Ser242 are Cytoplasmic-facing. A helical transmembrane segment spans residues Thr243–Val263. The Extracellular segment spans residues Arg264 to Asn274. The helical transmembrane segment at Trp275 to Leu295 threads the bilayer. Residues Arg296–Lys331 lie on the Cytoplasmic side of the membrane.

The protein belongs to the G-protein coupled receptor 1 family.

The protein localises to the cell membrane. In terms of biological role, odorant receptor. This Homo sapiens (Human) protein is Olfactory receptor 6S1 (OR6S1).